Consider the following 395-residue polypeptide: uncharacterized protein (395 aa).

A signal peptide spans 1–18 (MKHVIMLYFIAAATLFSS). A lipid anchor (N-palmitoyl cysteine) is attached at Cys19. The S-diacylglycerol cysteine moiety is linked to residue Cys19.

It is found in the cell outer membrane. Its function is as follows. May be involved in ulvan degradation. Ulvan is the main polysaccharide component of the Ulvales (green seaweed) cell wall. It is composed of disaccharide building blocks comprising 3-sulfated rhamnose (Rha3S) linked to D-glucuronic acid (GlcA), L-iduronic acid (IduA), or D-xylose (Xyl). This is an uncharacterized protein from Formosa agariphila (strain DSM 15362 / KCTC 12365 / LMG 23005 / KMM 3901 / M-2Alg 35-1).